A 1043-amino-acid chain; its full sequence is Desmoglein-1 (1043 aa).

An N-terminal signal peptide occupies residues 1–23 (MNWPFFRAAVVLFIFLVVLEVNS). The propeptide occupies 24 to 49 (DFRIQVRDYNTKNGTIKWHSLRRQKR). 4 consecutive Cadherin domains span residues 50–158 (EWIK…PVFS), 159–270 (MSTF…PYME), 271–385 (LPTQ…GSVF), and 386–498 (RPGS…VNGS). At 50 to 551 (EWIKFAAACR…PLRDNVHFGP (502 aa)) the chain is on the extracellular side. N-linked (GlcNAc...) asparagine glycosylation is found at N110 and N180. N496 carries N-linked (GlcNAc...) asparagine glycosylation. A helical membrane pass occupies residues 552–572 (AGIGLLIMGFLVLGLVPFLLM). Residues 573–1043 (CCDCGGAPGG…TKYSTVQYTK (471 aa)) are Cytoplasmic-facing. A disordered region spans residues 770 to 807 (DVEPFPDSDPSWPPKSTEPVCPPQGTEPTGGGHPPISP). Desmoglein repeat repeat units follow at residues 819–845 (TYPSGPGVQHPTPIPDPLGYGNVTVTE), 846–875 (SYTSSGTLKPSVHIHDNRHASNVVVTERVV), 876–905 (GPISGADLQGMLEMPDLRDGSNVIVTERVI), 906–933 (APSSSLPTTLTIPDPRQSSNVVVTERVI), and 934–962 (QPTSGIVGNLSMHPELSNTHNVIVTERVV).

As to quaternary structure, binds to JUP/plakoglobin. Interacts with PKP2. Interacts with DSC3; there is evidence to suggest that the interaction promotes cell-cell adhesion of keratinocytes. As to expression, expressed in the epidermis. Expressed in the muzzle epithelium.

The protein resides in the cell membrane. It localises to the cell junction. Its subcellular location is the desmosome. It is found in the cytoplasm. The protein localises to the nucleus. In terms of biological role, component of intercellular desmosome junctions. Involved in the interaction of plaque proteins and intermediate filaments mediating cell-cell adhesion. This chain is Desmoglein-1 (DSG1), found in Bos taurus (Bovine).